The sequence spans 286 residues: Bifunctional protein FolD (286 aa).

NADP(+) contacts are provided by residues 166 to 168 (GRS), S191, and I232.

This sequence belongs to the tetrahydrofolate dehydrogenase/cyclohydrolase family. In terms of assembly, homodimer.

It catalyses the reaction (6R)-5,10-methylene-5,6,7,8-tetrahydrofolate + NADP(+) = (6R)-5,10-methenyltetrahydrofolate + NADPH. It carries out the reaction (6R)-5,10-methenyltetrahydrofolate + H2O = (6R)-10-formyltetrahydrofolate + H(+). It functions in the pathway one-carbon metabolism; tetrahydrofolate interconversion. Catalyzes the oxidation of 5,10-methylenetetrahydrofolate to 5,10-methenyltetrahydrofolate and then the hydrolysis of 5,10-methenyltetrahydrofolate to 10-formyltetrahydrofolate. The sequence is that of Bifunctional protein FolD from Herpetosiphon aurantiacus (strain ATCC 23779 / DSM 785 / 114-95).